The sequence spans 201 residues: METIVLAVEPRTCSKNEAKTLRTEGKVPAVVYHNGEDNQHICVNELALEKLVHSPESHIINLEFPDGKNRRSLIKDVQFDPVTDKVIHADFQFFSAGEVLEMEVPVTFTGKGPGIEAGGRLQALVHALTVKGVPSSIPDHITLDISAMELGETMHIKEIPAEIAAGKFEFVGEPETPVVSITAPRVEAEKTEEEEPESTEE.

The interval V179–E201 is disordered. The span at K190–E201 shows a compositional bias: acidic residues.

The protein belongs to the bacterial ribosomal protein bL25 family. CTC subfamily. As to quaternary structure, part of the 50S ribosomal subunit; part of the 5S rRNA/L5/L18/L25 subcomplex. Contacts the 5S rRNA. Binds to the 5S rRNA independently of L5 and L18.

In terms of biological role, this is one of the proteins that binds to the 5S RNA in the ribosome where it forms part of the central protuberance. The sequence is that of Large ribosomal subunit protein bL25 from Prosthecochloris aestuarii (strain DSM 271 / SK 413).